The sequence spans 148 residues: Receptor activity-modifying protein 3 (148 aa).

Residues 1–23 form the signal peptide; sequence METGALRRPQLLPLLLLLCGGCP. Over 24–113 the chain is Extracellular; that stretch reads RAGGCNETGM…CTVDRVHLED (90 aa). Asn-29, Asn-58, Asn-71, and Asn-103 each carry an N-linked (GlcNAc...) asparagine glycan. 2 disulfides stabilise this stretch: Cys-40-Cys-72 and Cys-57-Cys-104. Residues 114–138 traverse the membrane as a helical segment; the sequence is PPDEVLIPLIVIPVVLTVAMAGLVV. The Cytoplasmic portion of the chain corresponds to 139–148; sequence WRSKRTDTLL.

This sequence belongs to the RAMP family. Heterodimer of CALCRL and RAMP3; interaction induces allosteric modulation of CALCRL function and ligand specificity for adrenomedullin/ADM and intermedin/ADM2. Heterodimer of CALCR and RAMP3; interaction form the receptor complex AMYR3 for amylin/IAPP. Interacts with GPER1. In terms of tissue distribution, strongly expressed in lung, breast, immune system and fetal tissues.

The protein resides in the cell membrane. The protein localises to the membrane. Accessory protein that interacts with and modulates the function of G-protein coupled receptors including calcitonin gene-related peptide type 1 receptor (CALCRL), calcitonin receptor (CALCR) and G-protein coupled estrogen receptor 1 (GPER1). Required for the transport of CALCRL and GPER1 receptors to the plasma membrane. Plays a role in cardioprotection by reducing cardiac hypertrophy and perivascular fibrosis in a GPER1-dependent manner. Together with CALCRL, form a receptor complex for adrenomedullin/ADM and intermedin/ADM2. Together with CALCR, act as a receptor complex for amylin/IAPP. The sequence is that of Receptor activity-modifying protein 3 from Homo sapiens (Human).